The sequence spans 411 residues: Glutamate dehydrogenase 1, mitochondrial (411 aa).

The N-terminal 18 residues, 1-18 (MNALAATSRNFKQAAKLL), are a transit peptide targeting the mitochondrion. Lys-102 is an active-site residue.

The protein belongs to the Glu/Leu/Phe/Val dehydrogenases family.

Its subcellular location is the mitochondrion. The catalysed reaction is L-glutamate + NAD(+) + H2O = 2-oxoglutarate + NH4(+) + NADH + H(+). It catalyses the reaction L-glutamate + NADP(+) + H2O = 2-oxoglutarate + NH4(+) + NADPH + H(+). The polypeptide is Glutamate dehydrogenase 1, mitochondrial (GDH1) (Oryza sativa subsp. indica (Rice)).